The following is a 466-amino-acid chain: Soluble pyridine nucleotide transhydrogenase (466 aa).

36–45 (ERYQNVGGGC) is an FAD binding site.

The protein belongs to the class-I pyridine nucleotide-disulfide oxidoreductase family. The cofactor is FAD.

It is found in the cytoplasm. It carries out the reaction NAD(+) + NADPH = NADH + NADP(+). Functionally, conversion of NADPH, generated by peripheral catabolic pathways, to NADH, which can enter the respiratory chain for energy generation. This is Soluble pyridine nucleotide transhydrogenase from Escherichia coli O81 (strain ED1a).